The primary structure comprises 335 residues: Tryptophan--tRNA ligase (335 aa).

ATP is bound by residues 19-21 and 28-29; these read QPS and GN. A 'HIGH' region motif is present at residues 20-29; it reads PSSGMLHLGN. Asp143 contributes to the L-tryptophan binding site. Residues 155–157, Ile192, and 201–205 contribute to the ATP site; these read GAD and KMSKS. Positions 201–205 match the 'KMSKS' region motif; it reads KMSKS.

This sequence belongs to the class-I aminoacyl-tRNA synthetase family. As to quaternary structure, homodimer.

It localises to the cytoplasm. It carries out the reaction tRNA(Trp) + L-tryptophan + ATP = L-tryptophyl-tRNA(Trp) + AMP + diphosphate + H(+). In terms of biological role, catalyzes the attachment of tryptophan to tRNA(Trp). The polypeptide is Tryptophan--tRNA ligase (Tropheryma whipplei (strain TW08/27) (Whipple's bacillus)).